Reading from the N-terminus, the 258-residue chain is Imidazole glycerol phosphate synthase subunit HisF (258 aa).

Residues Asp-11 and Asp-130 contribute to the active site.

This sequence belongs to the HisA/HisF family. Heterodimer of HisH and HisF.

The protein resides in the cytoplasm. It catalyses the reaction 5-[(5-phospho-1-deoxy-D-ribulos-1-ylimino)methylamino]-1-(5-phospho-beta-D-ribosyl)imidazole-4-carboxamide + L-glutamine = D-erythro-1-(imidazol-4-yl)glycerol 3-phosphate + 5-amino-1-(5-phospho-beta-D-ribosyl)imidazole-4-carboxamide + L-glutamate + H(+). Its pathway is amino-acid biosynthesis; L-histidine biosynthesis; L-histidine from 5-phospho-alpha-D-ribose 1-diphosphate: step 5/9. IGPS catalyzes the conversion of PRFAR and glutamine to IGP, AICAR and glutamate. The HisF subunit catalyzes the cyclization activity that produces IGP and AICAR from PRFAR using the ammonia provided by the HisH subunit. In Salmonella agona (strain SL483), this protein is Imidazole glycerol phosphate synthase subunit HisF.